A 147-amino-acid chain; its full sequence is Small ribosomal subunit protein bS6 (147 aa).

The disordered stretch occupies residues 103–147 (AARMAANLPSFPEDEDTEEKGSAPLAREEEGIGEEAQTDEAEDKE). A compositionally biased stretch (acidic residues) spans 133–147 (GIGEEAQTDEAEDKE).

This sequence belongs to the bacterial ribosomal protein bS6 family.

In terms of biological role, binds together with bS18 to 16S ribosomal RNA. The chain is Small ribosomal subunit protein bS6 from Syntrophobacter fumaroxidans (strain DSM 10017 / MPOB).